Here is a 103-residue protein sequence, read N- to C-terminus: Small ribosomal subunit protein uS10 (103 aa).

The protein belongs to the universal ribosomal protein uS10 family. In terms of assembly, part of the 30S ribosomal subunit.

Involved in the binding of tRNA to the ribosomes. This Baumannia cicadellinicola subsp. Homalodisca coagulata protein is Small ribosomal subunit protein uS10.